The following is a 177-amino-acid chain: Large ribosomal subunit protein uL6 (177 aa).

Belongs to the universal ribosomal protein uL6 family. As to quaternary structure, part of the 50S ribosomal subunit.

In terms of biological role, this protein binds to the 23S rRNA, and is important in its secondary structure. It is located near the subunit interface in the base of the L7/L12 stalk, and near the tRNA binding site of the peptidyltransferase center. This Glaesserella parasuis serovar 5 (strain SH0165) (Haemophilus parasuis) protein is Large ribosomal subunit protein uL6.